A 91-amino-acid polypeptide reads, in one-letter code: UPF0223 protein SACOL1106 (91 aa).

It belongs to the UPF0223 family.

This is UPF0223 protein SACOL1106 from Staphylococcus aureus (strain COL).